Reading from the N-terminus, the 632-residue chain is tRNA uridine 5-carboxymethylaminomethyl modification enzyme MnmG (632 aa).

FAD contacts are provided by residues 13–18, Val-125, and Ser-180; that span reads GGGHAG. Residue 273-287 coordinates NAD(+); the sequence is GPRYCPSIEDKINRF. Gln-370 lines the FAD pocket.

It belongs to the MnmG family. In terms of assembly, homodimer. Heterotetramer of two MnmE and two MnmG subunits. Requires FAD as cofactor.

Its subcellular location is the cytoplasm. Functionally, NAD-binding protein involved in the addition of a carboxymethylaminomethyl (cmnm) group at the wobble position (U34) of certain tRNAs, forming tRNA-cmnm(5)s(2)U34. This chain is tRNA uridine 5-carboxymethylaminomethyl modification enzyme MnmG, found in Shewanella sediminis (strain HAW-EB3).